The sequence spans 218 residues: Ras-related protein Rab-4A (218 aa).

9 residues coordinate GTP: G23, T24, G25, K26, S27, C28, S42, H44, and T45. A Mg(2+)-binding site is contributed by S27. The short motif at 44–49 (HTIGVE) is the Switch 1 element. T45 and D68 together coordinate Mg(2+). Positions 70-79 (AGQERFRSVT) match the Switch 2 motif. A GTP-binding site is contributed by G71. Q72 is modified (5-glutamyl serotonin). GTP contacts are provided by N126, K127, D129, A157, and L158. Residue S190 is modified to Phosphoserine. S204 bears the Phosphoserine; by CDK1 mark. Residues C216 and C218 are each lipidated (S-geranylgeranyl cysteine). At C218 the chain carries Cysteine methyl ester.

It belongs to the small GTPase superfamily. Rab family. In terms of assembly, interacts with SGSM1, SGSM2 and SGSM3. Interacts with RAB11FIP1, RABEP1, ZFYVE20 and RUFY1. Interacts (membrane-bound form) with NDRG1; the interaction involves NDRG1 in vesicular recycling of E-cadherin. Interacts (in GTP-bound form) with GRIPAP1 (via N-terminus). Interacts with RABEP1 and RBSN. Does not interact with HPS4. Does not interact with HPS4. Interacts with RABEP2; this interaction may mediate VEGFR2 cell surface expression. Mg(2+) serves as cofactor. In terms of processing, serotonylation of Gln-72 by TGM2 during activation and aggregation of platelets leads to constitutive activation of GTPase activity. Phosphorylated by CDK1 kinase during mitosis. In terms of tissue distribution, expressed in the central nervous system, including cortex, cerebellum, midbrain and spinal cord, and in the kidney, lung, liver and spleen.

The protein localises to the membrane. The protein resides in the cytoplasm. It is found in the early endosome membrane. It localises to the recycling endosome membrane. The catalysed reaction is GTP + H2O = GDP + phosphate + H(+). Regulated by guanine nucleotide exchange factors (GEFs) which promote the exchange of bound GDP for free GTP. Regulated by GTPase activating proteins (GAPs) which increase the GTP hydrolysis activity. Inhibited by GDP dissociation inhibitors (GDIs). Its function is as follows. The small GTPases Rab are key regulators of intracellular membrane trafficking, from the formation of transport vesicles to their fusion with membranes. Rabs cycle between an inactive GDP-bound form and an active GTP-bound form that is able to recruit to membranes different sets of downstream effectors directly responsible for vesicle formation, movement, tethering and fusion. RAB4A is involved in protein transport. Also plays a role in vesicular traffic. Mediates VEGFR2 endosomal trafficking to enhance VEGFR2 signaling. Acts as a regulator of platelet alpha-granule release during activation and aggregation of platelets. The polypeptide is Ras-related protein Rab-4A (Mus musculus (Mouse)).